Here is a 530-residue protein sequence, read N- to C-terminus: C2H2-type transcription factor MSN2 (530 aa).

2 C2H2-type zinc fingers span residues 409-432 (FVCDLCNRRFRRQEHLKRHYRSLH) and 438-460 (FECNECGKKFSRSDNLAQHARTH).

It is found in the nucleus. It localises to the cytoplasm. Functionally, transcription factor that acts as a key downstream transcription factor in the HOG1-MAPK pathway. Plays crucial roles in the regulation of conidiation, virulence and multi-stress responses. In addition to regulating the expression of genes specifically involved in stress-response, conidiation and virulence, controls also expression of cellular signaling factors. The protein is C2H2-type transcription factor MSN2 of Metarhizium robertsii (strain ARSEF 23 / ATCC MYA-3075) (Metarhizium anisopliae (strain ARSEF 23)).